The chain runs to 438 residues: 3-phosphoshikimate 1-carboxyvinyltransferase (438 aa).

Positions 23, 24, and 28 each coordinate 3-phosphoshikimate. Lys23 contacts phosphoenolpyruvate. The phosphoenolpyruvate site is built by Gly94 and Arg122. Residues Ser167, Gln169, Asp321, and Lys348 each contribute to the 3-phosphoshikimate site. Phosphoenolpyruvate is bound at residue Gln169. The active-site Proton acceptor is Asp321. 2 residues coordinate phosphoenolpyruvate: Arg352 and Arg393.

Belongs to the EPSP synthase family. Monomer.

Its subcellular location is the cytoplasm. It carries out the reaction 3-phosphoshikimate + phosphoenolpyruvate = 5-O-(1-carboxyvinyl)-3-phosphoshikimate + phosphate. It functions in the pathway metabolic intermediate biosynthesis; chorismate biosynthesis; chorismate from D-erythrose 4-phosphate and phosphoenolpyruvate: step 6/7. In terms of biological role, catalyzes the transfer of the enolpyruvyl moiety of phosphoenolpyruvate (PEP) to the 5-hydroxyl of shikimate-3-phosphate (S3P) to produce enolpyruvyl shikimate-3-phosphate and inorganic phosphate. The protein is 3-phosphoshikimate 1-carboxyvinyltransferase of Helicobacter hepaticus (strain ATCC 51449 / 3B1).